The primary structure comprises 361 residues: tRNA 2-selenouridine synthase (361 aa).

Residues 11–134 (ALLERPLIDV…MRQCVNAEIE (124 aa)) enclose the Rhodanese domain. Cysteine 94 functions as the S-selanylcysteine intermediate in the catalytic mechanism.

The protein belongs to the SelU family. In terms of assembly, monomer.

It catalyses the reaction 5-methylaminomethyl-2-thiouridine(34) in tRNA + selenophosphate + (2E)-geranyl diphosphate + H2O + H(+) = 5-methylaminomethyl-2-selenouridine(34) in tRNA + (2E)-thiogeraniol + phosphate + diphosphate. The catalysed reaction is 5-methylaminomethyl-2-thiouridine(34) in tRNA + (2E)-geranyl diphosphate = 5-methylaminomethyl-S-(2E)-geranyl-thiouridine(34) in tRNA + diphosphate. It carries out the reaction 5-methylaminomethyl-S-(2E)-geranyl-thiouridine(34) in tRNA + selenophosphate + H(+) = 5-methylaminomethyl-2-(Se-phospho)selenouridine(34) in tRNA + (2E)-thiogeraniol. The enzyme catalyses 5-methylaminomethyl-2-(Se-phospho)selenouridine(34) in tRNA + H2O = 5-methylaminomethyl-2-selenouridine(34) in tRNA + phosphate. Its function is as follows. Involved in the post-transcriptional modification of the uridine at the wobble position (U34) of tRNA(Lys), tRNA(Glu) and tRNA(Gln). Catalyzes the conversion of 2-thiouridine (S2U-RNA) to 2-selenouridine (Se2U-RNA). Acts in a two-step process involving geranylation of 2-thiouridine (S2U) to S-geranyl-2-thiouridine (geS2U) and subsequent selenation of the latter derivative to 2-selenouridine (Se2U) in the tRNA chain. The sequence is that of tRNA 2-selenouridine synthase from Chromohalobacter salexigens (strain ATCC BAA-138 / DSM 3043 / CIP 106854 / NCIMB 13768 / 1H11).